Consider the following 183-residue polypeptide: Hypoxanthine-guanine phosphoribosyltransferase (183 aa).

Residues Arg47 and Gly48 each coordinate diphosphate. Residues Glu103 and Asp104 each contribute to the Mg(2+) site. The active-site Proton acceptor is Asp107. GMP-binding positions include Lys134, 155-156 (FV), and Asp162. A diphosphate-binding site is contributed by Arg168.

Belongs to the purine/pyrimidine phosphoribosyltransferase family. The cofactor is Mg(2+).

It localises to the cytoplasm. The enzyme catalyses IMP + diphosphate = hypoxanthine + 5-phospho-alpha-D-ribose 1-diphosphate. It carries out the reaction GMP + diphosphate = guanine + 5-phospho-alpha-D-ribose 1-diphosphate. The protein operates within purine metabolism; IMP biosynthesis via salvage pathway; IMP from hypoxanthine: step 1/1. It participates in purine metabolism; GMP biosynthesis via salvage pathway; GMP from guanine: step 1/1. Its function is as follows. Purine salvage pathway enzyme that catalyzes the transfer of the ribosyl-5-phosphate group from 5-phospho-alpha-D-ribose 1-diphosphate (PRPP) to the N9 position of the 6-oxopurines hypoxanthine and guanine to form the corresponding ribonucleotides IMP (inosine 5'-monophosphate) and GMP (guanosine 5'-monophosphate), with the release of PPi. The chain is Hypoxanthine-guanine phosphoribosyltransferase (hpt) from Lactococcus lactis subsp. lactis (strain IL1403) (Streptococcus lactis).